A 353-amino-acid chain; its full sequence is Photosystem II D2 protein (353 aa).

N-acetylthreonine is present on threonine 2. Threonine 2 carries the phosphothreonine modification. The chain crosses the membrane as a helical span at residues 41–61 (CAYFALGGWLTGTTFVTSWYT). Histidine 118 contacts chlorophyll a. Residues 125–141 (GFMLRQFEIARSVQLRP) form a helical membrane-spanning segment. Pheophytin a contacts are provided by glutamine 130 and asparagine 143. The helical transmembrane segment at 153–166 (VFVSVFLIYPLGQS) threads the bilayer. Residue histidine 198 participates in chlorophyll a binding. Residues 208–228 (AALLCAIHGATVENTIFEDGD) form a helical membrane-spanning segment. A plastoquinone contacts are provided by histidine 215 and phenylalanine 262. Fe cation is bound at residue histidine 215. Position 269 (histidine 269) interacts with Fe cation. Residues 279–295 (GLWMSAVGVVGLAVNLR) traverse the membrane as a helical segment.

Belongs to the reaction center PufL/M/PsbA/D family. As to quaternary structure, PSII is composed of 1 copy each of membrane proteins PsbA, PsbB, PsbC, PsbD, PsbE, PsbF, PsbH, PsbI, PsbJ, PsbK, PsbL, PsbM, PsbT, PsbX, PsbY, PsbZ, Psb30/Ycf12, at least 3 peripheral proteins of the oxygen-evolving complex and a large number of cofactors. It forms dimeric complexes. Requires The D1/D2 heterodimer binds P680, chlorophylls that are the primary electron donor of PSII, and subsequent electron acceptors. It shares a non-heme iron and each subunit binds pheophytin, quinone, additional chlorophylls, carotenoids and lipids. There is also a Cl(-1) ion associated with D1 and D2, which is required for oxygen evolution. The PSII complex binds additional chlorophylls, carotenoids and specific lipids. as cofactor.

The protein localises to the plastid. It localises to the chloroplast thylakoid membrane. It catalyses the reaction 2 a plastoquinone + 4 hnu + 2 H2O = 2 a plastoquinol + O2. In terms of biological role, photosystem II (PSII) is a light-driven water:plastoquinone oxidoreductase that uses light energy to abstract electrons from H(2)O, generating O(2) and a proton gradient subsequently used for ATP formation. It consists of a core antenna complex that captures photons, and an electron transfer chain that converts photonic excitation into a charge separation. The D1/D2 (PsbA/PsbD) reaction center heterodimer binds P680, the primary electron donor of PSII as well as several subsequent electron acceptors. D2 is needed for assembly of a stable PSII complex. This is Photosystem II D2 protein from Chaetosphaeridium globosum (Charophycean green alga).